The following is a 173-amino-acid chain: Bursicon (173 aa).

A signal peptide spans 1–32; it reads MLRHLLRHENNKVFVLILLYCVLVSILKLCTA. 5 cysteine pairs are disulfide-bonded: Cys-52/Cys-101, Cys-66/Cys-115, Cys-76/Cys-136, Cys-80/Cys-138, and Cys-98/Cys-141. A CTCK domain is found at 52–142; that stretch reads CQVTPVIHVL…PLECMCRPCT (91 aa).

Heterodimer of Burs and Pburs. Expressed in one to two pairs of neurons in each of the thoracic and abdominal neuromeres of the larval CNS. Coexpressed with CCAP in most CCAP-specific neurons. Coexpressed with Pburs in four bilateral neurons in thoracic and abdominal neuromeres of the ventral nervous system.

The protein localises to the secreted. Its function is as follows. Final heterodimeric neurohormone released at the end of the molting cycle, involved in the sclerotization (tanning) of the insect cuticle, melanization and wing spreading. Heterodimer specifically activates the G protein-coupled receptor rk. The protein is Bursicon of Drosophila melanogaster (Fruit fly).